The sequence spans 156 residues: Small ribosomal subunit protein uS7 (156 aa).

It belongs to the universal ribosomal protein uS7 family. Part of the 30S ribosomal subunit. Contacts proteins S9 and S11.

Its function is as follows. One of the primary rRNA binding proteins, it binds directly to 16S rRNA where it nucleates assembly of the head domain of the 30S subunit. Is located at the subunit interface close to the decoding center, probably blocks exit of the E-site tRNA. In Rhizobium rhizogenes (strain K84 / ATCC BAA-868) (Agrobacterium radiobacter), this protein is Small ribosomal subunit protein uS7.